The chain runs to 1940 residues: Myosin-1B (1940 aa).

One can recognise a Myosin N-terminal SH3-like domain in the interval 33-82; the sequence is DAKSSVFVVHAKESYVKSTIQSKESGKVTVKTEGGETLTVKEDQIFSMNP. The Myosin motor domain maps to 86-783; sequence DKIEDMAMMT…LLGLLEEMRD (698 aa). At K130 the chain carries N6,N6,N6-trimethyllysine. Position 179-186 (179-186) interacts with ATP; the sequence is GESGAGKT. Actin-binding regions lie at residues 660-682 and 762-776; these read LNKL…IPNE and KFGH…GLLG. One can recognise an IQ domain in the interval 786 to 815; it reads LAQLITRTQARCRGFLMRVEFKKMMERRES. Residues 844–1940 are a coiled coil; it reads LLKSAESEKE…EIGKKAESEE (1097 aa). The segment at 1912 to 1940 is disordered; the sequence is EERADIAESQVNKLRAKSREIGKKAESEE. Residues 1928–1940 are compositionally biased toward basic and acidic residues; it reads KSREIGKKAESEE.

It belongs to the TRAFAC class myosin-kinesin ATPase superfamily. Myosin family. Muscle myosin is a hexameric protein that consists of 2 heavy chain subunits (MHC), 2 alkali light chain subunits (MLC) and 2 regulatory light chain subunits (MLC-2).

The protein localises to the cytoplasm. It localises to the myofibril. Its function is as follows. Muscle contraction. This is Myosin-1B (MYH1B) from Gallus gallus (Chicken).